A 264-amino-acid polypeptide reads, in one-letter code: MENIEKKCQPETINEDNNDEKQYEPEIIEFTVNGFNYVVKFSKTCVPSIHITCTHVEEFYSWSFTTDKNIDNQIPTNTIENVAKQDIKIHPKMLFDMFCSFKNNSLEKMFELVFPKDFKTHETNLNIYIFTTIAYSKYVDHKYISLAQVEISEYDRFLLKSSKANKLFMEQTKKELNDMREINETLKNEINNTKNIFNESIKNLVENFECEYAKDKTIESIKTEEENFEDFEKLMKKFLANPKCMKYIIDAISNSNVFATKDEL.

The tract at residues 1 to 20 (MENIEKKCQPETINEDNNDE) is disordered.

This sequence belongs to the mimivirus R73/L269/L862 family.

This is an uncharacterized protein from Acanthamoeba polyphaga mimivirus (APMV).